Here is a 149-residue protein sequence, read N- to C-terminus: Transcriptional repressor NrdR (149 aa).

A zinc finger spans residues 3-34 (CPFCSENDTKVIDSRLVADGHQVRRRRQCLAC). One can recognise an ATP-cone domain in the interval 49–139 (PKVIKSNGNR…VYRSFEDIRE (91 aa)).

It belongs to the NrdR family. It depends on Zn(2+) as a cofactor.

Functionally, negatively regulates transcription of bacterial ribonucleotide reductase nrd genes and operons by binding to NrdR-boxes. This Vibrio parahaemolyticus serotype O3:K6 (strain RIMD 2210633) protein is Transcriptional repressor NrdR.